The chain runs to 755 residues: Sentrin-specific protease 5 (755 aa).

Positions glutamine 269–lysine 329 are disordered. Positions threonine 272–glycine 283 are enriched in basic and acidic residues. Positions phenylalanine 563–leucine 724 are protease. Catalysis depends on residues histidine 646, aspartate 663, and cysteine 713.

Belongs to the peptidase C48 family. In terms of assembly, interacts with CCAR2.

The protein resides in the nucleus. It is found in the nucleolus. In terms of biological role, protease that catalyzes two essential functions in the SUMO pathway: processing of full-length SUMO3 to its mature form and deconjugation of SUMO2 and SUMO3 from targeted proteins. Has weak proteolytic activity against full-length SUMO1 or SUMO1 conjugates. Required for cell division. The chain is Sentrin-specific protease 5 (SENP5) from Macaca fascicularis (Crab-eating macaque).